The primary structure comprises 683 residues: UvrABC system protein B (683 aa).

The segment at 1–29 (MTDTGPLQPDRPDLDRPLSVDAPFEPAGD) is disordered. Residues 39–417 (AGFESGAEKQ…PGDYERDHSE (379 aa)) form the Helicase ATP-binding domain. 52-59 (GVTGSGKT) provides a ligand contact to ATP. The Beta-hairpin signature appears at 105-128 (YYDYYQPEAYVEQTDTYIDKDMSI). The region spanning 442–604 (QVEDLIERIQ…EPRTIEKPVS (163 aa)) is the Helicase C-terminal domain. The span at 587-603 (EFNAEHGHEPRTIEKPV) shows a compositional bias: basic and acidic residues. Residues 587–620 (EFNAEHGHEPRTIEKPVSETNLPGSSTDTDGVAD) form a disordered region. Residues 604–615 (SETNLPGSSTDT) are compositionally biased toward polar residues. The region spanning 630–665 (EQLIERLETRMQEAADNLEFELAADIRDRIRELRET) is the UVR domain.

It belongs to the UvrB family. As to quaternary structure, forms a heterotetramer with UvrA during the search for lesions. Interacts with UvrC in an incision complex.

The protein resides in the cytoplasm. Its function is as follows. The UvrABC repair system catalyzes the recognition and processing of DNA lesions. A damage recognition complex composed of 2 UvrA and 2 UvrB subunits scans DNA for abnormalities. Upon binding of the UvrA(2)B(2) complex to a putative damaged site, the DNA wraps around one UvrB monomer. DNA wrap is dependent on ATP binding by UvrB and probably causes local melting of the DNA helix, facilitating insertion of UvrB beta-hairpin between the DNA strands. Then UvrB probes one DNA strand for the presence of a lesion. If a lesion is found the UvrA subunits dissociate and the UvrB-DNA preincision complex is formed. This complex is subsequently bound by UvrC and the second UvrB is released. If no lesion is found, the DNA wraps around the other UvrB subunit that will check the other stand for damage. This chain is UvrABC system protein B, found in Natronomonas pharaonis (strain ATCC 35678 / DSM 2160 / CIP 103997 / JCM 8858 / NBRC 14720 / NCIMB 2260 / Gabara) (Halobacterium pharaonis).